The chain runs to 307 residues: Elongation factor Ts (307 aa).

The involved in Mg(2+) ion dislocation from EF-Tu stretch occupies residues 80–83; that stretch reads TDFV.

The protein belongs to the EF-Ts family.

The protein localises to the cytoplasm. Functionally, associates with the EF-Tu.GDP complex and induces the exchange of GDP to GTP. It remains bound to the aminoacyl-tRNA.EF-Tu.GTP complex up to the GTP hydrolysis stage on the ribosome. This is Elongation factor Ts from Bradyrhizobium sp. (strain ORS 278).